We begin with the raw amino-acid sequence, 169 residues long: Ribosome maturation factor RimM (169 aa).

The region spanning 94 to 167 (ENEFYFHEII…KITIEVMEGL (74 aa)) is the PRC barrel domain.

Belongs to the RimM family. In terms of assembly, binds ribosomal protein uS19.

The protein resides in the cytoplasm. Functionally, an accessory protein needed during the final step in the assembly of 30S ribosomal subunit, possibly for assembly of the head region. Essential for efficient processing of 16S rRNA. May be needed both before and after RbfA during the maturation of 16S rRNA. It has affinity for free ribosomal 30S subunits but not for 70S ribosomes. The protein is Ribosome maturation factor RimM of Listeria welshimeri serovar 6b (strain ATCC 35897 / DSM 20650 / CCUG 15529 / CIP 8149 / NCTC 11857 / SLCC 5334 / V8).